A 350-amino-acid chain; its full sequence is MIPSERVGIVGYGAYVPRYRIKAEEIAAVWGDDVDSIKSGLMIEEKSVPSETEDSATIAVEAAKNAVARAEIDPKDIGAIYVGSESPPYAVKPTATIVAAAIGATPDLTAADYEFACKAGTAAIQTCAGLVASGMIKYGLAIGADTAQGAPGDPLEYTAAAGGAAFVIGRKKLVAEMEGTYSYTTDTPDFWRREGQPYPRHGGRFTGAPAYFKHIIRAARGLMEELDLSPEDFDYAVFHQPNGKFPRKVARSLGFEPEQVEPTIVVDRVGNTYSGSSLLGFTAALDRAEPGDRILVVSYGSGAGSDAFSFVVTERIEEVREKAPLLEEYLEDRVYVTYGEYAKMKKKLKF.

(3S)-3-hydroxy-3-methylglutaryl-CoA contacts are provided by D33 and V34. E85 (proton donor/acceptor) is an active-site residue. (3S)-3-hydroxy-3-methylglutaryl-CoA-binding residues include C117 and T158. The Acyl-thioester intermediate role is filled by C117. Residue R204 participates in CoA binding. The (3S)-3-hydroxy-3-methylglutaryl-CoA site is built by T206 and H239. The Proton donor/acceptor role is filled by H239. Residue K244 coordinates CoA. Residues K248, N271, and S301 each contribute to the (3S)-3-hydroxy-3-methylglutaryl-CoA site.

This sequence belongs to the thiolase-like superfamily. Archaeal HMG-CoA synthase family. As to quaternary structure, interacts with acetoacetyl-CoA thiolase that catalyzes the precedent step in the pathway and with a DUF35 protein. The acetoacetyl-CoA thiolase/HMG-CoA synthase complex channels the intermediate via a fused CoA-binding site, which allows for efficient coupling of the endergonic thiolase reaction with the exergonic HMGCS reaction.

The enzyme catalyses acetoacetyl-CoA + acetyl-CoA + H2O = (3S)-3-hydroxy-3-methylglutaryl-CoA + CoA + H(+). It participates in metabolic intermediate biosynthesis; (R)-mevalonate biosynthesis; (R)-mevalonate from acetyl-CoA: step 2/3. Functionally, catalyzes the condensation of acetyl-CoA with acetoacetyl-CoA to form 3-hydroxy-3-methylglutaryl-CoA (HMG-CoA). Functions in the mevalonate (MVA) pathway leading to isopentenyl diphosphate (IPP), a key precursor for the biosynthesis of isoprenoid compounds that are building blocks of archaeal membrane lipids. The polypeptide is Hydroxymethylglutaryl-CoA synthase (Methanopyrus kandleri (strain AV19 / DSM 6324 / JCM 9639 / NBRC 100938)).